Consider the following 701-residue polypeptide: Vacuolar protein sorting-associated protein 52 B (701 aa).

2 coiled-coil regions span residues 23-45 and 511-533; these read FEEDSRSEDISLEGLQQELEECE and QLDINLERLRMAVDSLILKLAKL.

It belongs to the VPS52 family. In terms of assembly, component of the Golgi-associated retrograde protein (GARP) complex. As to expression, detected in pollen.

The protein resides in the golgi apparatus. Its subcellular location is the trans-Golgi network membrane. It localises to the endosome membrane. It is found in the golgi apparatus membrane. In terms of biological role, may be involved in retrograde transport of early and late endosomes to the late Golgi. The protein is Vacuolar protein sorting-associated protein 52 B (P2) of Arabidopsis thaliana (Mouse-ear cress).